We begin with the raw amino-acid sequence, 445 residues long: Rab GDP dissociation inhibitor beta (445 aa).

Met-1 bears the N-acetylmethionine mark. Lys-57 carries the post-translational modification N6-succinyllysine. Lys-112 is subject to N6-acetyllysine. The residue at position 130 (Ser-130) is a Phosphoserine. Lys-269 is modified (N6-acetyllysine). Position 382 is a phosphoserine (Ser-382).

It belongs to the Rab GDI family. As to quaternary structure, interacts with RHOH. Interacts with the GDP-bound inactive forms of RAB3A, RAB3B, RAB3C, RAB5A, RAB5B, RAB5C, RAB8A, RAB8B, RAB10, RAB12, RAB35, and RAB43; binds RAB3D to a lesser extent. Interacts with DZIP1; this interaction negatively regulates the interaction of GDI2 with GDP-bound RAB8A. In terms of tissue distribution, ubiquitously expressed.

The protein resides in the cytoplasm. It localises to the membrane. Its subcellular location is the golgi apparatus. It is found in the trans-Golgi network. In terms of biological role, GDP-dissociation inhibitor preventing the GDP to GTP exchange of most Rab proteins. By keeping these small GTPases in their inactive GDP-bound form regulates intracellular membrane trafficking. Negatively regulates protein transport to the cilium and ciliogenesis through the inhibition of RAB8A. This is Rab GDP dissociation inhibitor beta (GDI2) from Bos taurus (Bovine).